The chain runs to 373 residues: Ribonuclease D (373 aa).

Residues 3-171 enclose the 3'-5' exonuclease domain; the sequence is YQLITTDAGL…MAKRLVQETE (169 aa). Positions 210-289 constitute an HRDC domain; the sequence is RPRQLGCLQK…AEAAELEESA (80 aa).

It belongs to the RNase D family. The cofactor is a divalent metal cation.

The protein localises to the cytoplasm. The enzyme catalyses Exonucleolytic cleavage that removes extra residues from the 3'-terminus of tRNA to produce 5'-mononucleotides.. Its function is as follows. Exonuclease involved in the 3' processing of various precursor tRNAs. Initiates hydrolysis at the 3'-terminus of an RNA molecule and releases 5'-mononucleotides. The protein is Ribonuclease D of Serratia proteamaculans (strain 568).